A 193-amino-acid polypeptide reads, in one-letter code: Large ribosomal subunit protein uL18 (193 aa).

Belongs to the universal ribosomal protein uL18 family. In terms of assembly, part of the 50S ribosomal subunit. Contacts the 5S and 23S rRNAs.

Functionally, this is one of the proteins that bind and probably mediate the attachment of the 5S RNA into the large ribosomal subunit, where it forms part of the central protuberance. The chain is Large ribosomal subunit protein uL18 from Methanococcus maripaludis (strain C6 / ATCC BAA-1332).